Here is a 213-residue protein sequence, read N- to C-terminus: Kynurenine formamidase (213 aa).

Trp18 lines the substrate pocket. Positions 48, 52, and 54 each coordinate Zn(2+). Catalysis depends on His58, which acts as the Proton donor/acceptor. Positions 160 and 172 each coordinate Zn(2+).

Belongs to the Cyclase 1 superfamily. KynB family. In terms of assembly, homodimer. The cofactor is Zn(2+).

The catalysed reaction is N-formyl-L-kynurenine + H2O = L-kynurenine + formate + H(+). It participates in amino-acid degradation; L-tryptophan degradation via kynurenine pathway; L-kynurenine from L-tryptophan: step 2/2. In terms of biological role, catalyzes the hydrolysis of N-formyl-L-kynurenine to L-kynurenine, the second step in the kynurenine pathway of tryptophan degradation. This Burkholderia pseudomallei (strain 1710b) protein is Kynurenine formamidase.